We begin with the raw amino-acid sequence, 643 residues long: MAAAMIWWPRFLLLLCLTCKGSTFYVPGVAPINFHQNDPVEIKAVKLTSSRTQLPYEYYSLPFCQPIKITYKAENLGEVLRGDRIVNTPFQVLMNSEKKCEVLCNQSNKPITLTVEQSRLVAERITEEYYVHLIADNLPVATRLELYSSNRDSDDKKKEKDVQFEHGYRLGFTDVNKIYLHNHLSFILYYHREDMEEDQEHTYRVVRFEVIPQSIRLEDLKTGEKSSCTLPEGANSLPQEIDPTKENQLYFTYSVHWEESDIKWASRWDTYLTMSDVQIHWFSIINSVVVVFFLSGILSMIIIRTLRKDIANYNKEDDIEDTMEESGWKLVHGDVFRPPQYPMILSSLLGSGIQLFCMILIVIFVAMLGMLSPSSRGALMTTACFLFMFMGVFGGFSAGRLYRTLKGHRWKKGAFCTATLYPGVVFGICFVLNCFIWGKHSSGAVPFPTMVALLCMWFGISLPLVYLGYYFGFRKQPYDNPVRTNQIPRQIPEQRWYMNRFVGILMAGILPFGAMFIELFFIFSAIWENQFYYLFGFLFLVFIILVVSCSQISIVMVYFQLCAEDYRWWWRNFLVSGGSAFYVLVYAIFYFVNKLDIVEFIPSLLYFGYTTLMVLSFWLLTGTIGFYAAYMFVRKIYAAVKID.

A signal peptide spans 1–23 (MAAAMIWWPRFLLLLCLTCKGST). The Extracellular segment spans residues 24–282 (FYVPGVAPIN…TMSDVQIHWF (259 aa)). The chain crosses the membrane as a helical span at residues 283–303 (SIINSVVVVFFLSGILSMIII). Topologically, residues 304 to 347 (RTLRKDIANYNKEDDIEDTMEESGWKLVHGDVFRPPQYPMILSS) are cytoplasmic. At Tyr313 the chain carries Phosphotyrosine. A helical membrane pass occupies residues 348–368 (LLGSGIQLFCMILIVIFVAML). At 369-377 (GMLSPSSRG) the chain is on the extracellular side. A helical transmembrane segment spans residues 378 to 398 (ALMTTACFLFMFMGVFGGFSA). Residues 399–417 (GRLYRTLKGHRWKKGAFCT) are Cytoplasmic-facing. A helical membrane pass occupies residues 418-438 (ATLYPGVVFGICFVLNCFIWG). Residues 439 to 450 (KHSSGAVPFPTM) lie on the Extracellular side of the membrane. A helical transmembrane segment spans residues 451–471 (VALLCMWFGISLPLVYLGYYF). The Cytoplasmic portion of the chain corresponds to 472-502 (GFRKQPYDNPVRTNQIPRQIPEQRWYMNRFV). Residues 503-523 (GILMAGILPFGAMFIELFFIF) form a helical membrane-spanning segment. Residues 524–536 (SAIWENQFYYLFG) are Extracellular-facing. The helical transmembrane segment at 537–557 (FLFLVFIILVVSCSQISIVMV) threads the bilayer. The Cytoplasmic segment spans residues 558–571 (YFQLCAEDYRWWWR). The chain crosses the membrane as a helical span at residues 572–592 (NFLVSGGSAFYVLVYAIFYFV). At 593–599 (NKLDIVE) the chain is on the extracellular side. Residues 600 to 620 (FIPSLLYFGYTTLMVLSFWLL) traverse the membrane as a helical segment. Residues 621–643 (TGTIGFYAAYMFVRKIYAAVKID) are Cytoplasmic-facing.

It belongs to the nonaspanin (TM9SF) (TC 9.A.2) family.

The protein resides in the membrane. Its subcellular location is the golgi apparatus. The protein localises to the early endosome. Functionally, associates with proteins harboring glycine-rich transmembrane domains and ensures their efficient localization to the cell surface. This Mus musculus (Mouse) protein is Transmembrane 9 superfamily member 4 (Tm9sf4).